The chain runs to 212 residues: Pyridoxine/pyridoxamine 5'-phosphate oxidase (212 aa).

Substrate is bound by residues R8–Y11 and K66. FMN is bound by residues R61 to K66, F76 to T77, R82, K83, and Q105. Positions 123, 127, and 131 each coordinate substrate. FMN contacts are provided by residues Q140–S141 and W185. R191 to H193 serves as a coordination point for substrate. R195 serves as a coordination point for FMN.

This sequence belongs to the pyridoxamine 5'-phosphate oxidase family. In terms of assembly, homodimer. FMN serves as cofactor.

The enzyme catalyses pyridoxamine 5'-phosphate + O2 + H2O = pyridoxal 5'-phosphate + H2O2 + NH4(+). The catalysed reaction is pyridoxine 5'-phosphate + O2 = pyridoxal 5'-phosphate + H2O2. It functions in the pathway cofactor metabolism; pyridoxal 5'-phosphate salvage; pyridoxal 5'-phosphate from pyridoxamine 5'-phosphate: step 1/1. It participates in cofactor metabolism; pyridoxal 5'-phosphate salvage; pyridoxal 5'-phosphate from pyridoxine 5'-phosphate: step 1/1. Functionally, catalyzes the oxidation of either pyridoxine 5'-phosphate (PNP) or pyridoxamine 5'-phosphate (PMP) into pyridoxal 5'-phosphate (PLP). This Shewanella baltica (strain OS155 / ATCC BAA-1091) protein is Pyridoxine/pyridoxamine 5'-phosphate oxidase.